We begin with the raw amino-acid sequence, 317 residues long: tRNA uridine(34) hydroxylase (317 aa).

A Rhodanese domain is found at 123-217; sequence EDDDTIVIDA…YGKDPETKGE (95 aa). C177 acts as the Cysteine persulfide intermediate in catalysis.

Belongs to the TrhO family.

It catalyses the reaction uridine(34) in tRNA + AH2 + O2 = 5-hydroxyuridine(34) in tRNA + A + H2O. In terms of biological role, catalyzes oxygen-dependent 5-hydroxyuridine (ho5U) modification at position 34 in tRNAs. The sequence is that of tRNA uridine(34) hydroxylase from Staphylococcus carnosus (strain TM300).